The following is a 251-amino-acid chain: Diphthine synthase (251 aa).

Residues Leu-9, Asp-84, Val-87, 112–113, Leu-160, Ala-194, and His-219 contribute to the S-adenosyl-L-methionine site; that span reads SI.

It belongs to the diphthine synthase family. Homodimer.

The catalysed reaction is 2-[(3S)-amino-3-carboxypropyl]-L-histidyl-[translation elongation factor 2] + 3 S-adenosyl-L-methionine = diphthine-[translation elongation factor 2] + 3 S-adenosyl-L-homocysteine + 3 H(+). It participates in protein modification; peptidyl-diphthamide biosynthesis. S-adenosyl-L-methionine-dependent methyltransferase that catalyzes the trimethylation of the amino group of the modified target histidine residue in translation elongation factor 2 (EF-2), to form an intermediate called diphthine. The three successive methylation reactions represent the second step of diphthamide biosynthesis. The sequence is that of Diphthine synthase from Archaeoglobus fulgidus (strain ATCC 49558 / DSM 4304 / JCM 9628 / NBRC 100126 / VC-16).